A 671-amino-acid chain; its full sequence is Autophagy-related protein 22-2 (671 aa).

Polar residues-rich tracts occupy residues Met-1–Gln-10 and Pro-19–Phe-34. The interval Met-1 to Glu-67 is disordered. N-linked (GlcNAc...) asparagine glycosylation is found at Asn-5 and Asn-21. Positions Glu-39–Val-60 are enriched in basic and acidic residues. The next 4 membrane-spanning stretches (helical) occupy residues Tyr-83–Leu-103, Ser-155–Ile-175, Leu-188–Pro-208, and Leu-212–Leu-232. Residues Pro-251–Leu-271 are disordered. The helical transmembrane segment at Ile-324–Leu-344 threads the bilayer. Asn-346 carries an N-linked (GlcNAc...) asparagine glycan. 7 consecutive transmembrane segments (helical) span residues Leu-354–Leu-374, Phe-422–Val-442, Gly-457–Ile-477, Ala-491–Val-511, Trp-523–Cys-543, Tyr-560–Val-582, and Ala-591–Val-611. Residues Glu-634–Ile-671 are disordered.

The protein belongs to the ATG22 family.

It localises to the vacuole membrane. Its function is as follows. Vacuolar effluxer which mediate the efflux of amino acids resulting from autophagic degradation. The release of autophagic amino acids allows the maintenance of protein synthesis and viability during nitrogen starvation. In Sclerotinia sclerotiorum (strain ATCC 18683 / 1980 / Ss-1) (White mold), this protein is Autophagy-related protein 22-2 (atg22-2).